Here is a 177-residue protein sequence, read N- to C-terminus: Inorganic pyrophosphatase (177 aa).

Positions 34, 48, and 60 each coordinate substrate. Residues aspartate 70, aspartate 75, and aspartate 107 each coordinate Mg(2+). Tyrosine 144 contributes to the substrate binding site.

The protein belongs to the PPase family. Homohexamer. The cofactor is Mg(2+).

The protein localises to the cytoplasm. The catalysed reaction is diphosphate + H2O = 2 phosphate + H(+). Catalyzes the hydrolysis of inorganic pyrophosphate (PPi) forming two phosphate ions. This Picrophilus torridus (strain ATCC 700027 / DSM 9790 / JCM 10055 / NBRC 100828 / KAW 2/3) protein is Inorganic pyrophosphatase.